We begin with the raw amino-acid sequence, 350 residues long: Ubiquitin carboxyl-terminal hydrolase 11 (350 aa).

Positions 49–344 constitute a USP domain; it reads KGLYNVSGND…SACLLFYEME (296 aa). The active-site Nucleophile is Cys59. Residue His302 is the Proton acceptor of the active site.

The protein belongs to the peptidase C19 family.

The enzyme catalyses Thiol-dependent hydrolysis of ester, thioester, amide, peptide and isopeptide bonds formed by the C-terminal Gly of ubiquitin (a 76-residue protein attached to proteins as an intracellular targeting signal).. In Schizosaccharomyces pombe (strain 972 / ATCC 24843) (Fission yeast), this protein is Ubiquitin carboxyl-terminal hydrolase 11 (ubp11).